The sequence spans 89 residues: Small ribosomal subunit protein uS15c (89 aa).

The protein belongs to the universal ribosomal protein uS15 family. Part of the 30S ribosomal subunit.

The protein resides in the plastid. The protein is Small ribosomal subunit protein uS15c (rps15) of Aneura mirabilis (Parasitic liverwort).